We begin with the raw amino-acid sequence, 239 residues long: 7-cyano-7-deazaguanine synthase (239 aa).

Position 16–26 (16–26) interacts with ATP; the sequence is FSGGQDSTTCL. 4 residues coordinate Zn(2+): Cys-204, Cys-219, Cys-222, and Cys-225.

This sequence belongs to the QueC family. It depends on Zn(2+) as a cofactor.

The enzyme catalyses 7-carboxy-7-deazaguanine + NH4(+) + ATP = 7-cyano-7-deazaguanine + ADP + phosphate + H2O + H(+). It functions in the pathway purine metabolism; 7-cyano-7-deazaguanine biosynthesis. Catalyzes the ATP-dependent conversion of 7-carboxy-7-deazaguanine (CDG) to 7-cyano-7-deazaguanine (preQ(0)). The chain is 7-cyano-7-deazaguanine synthase from Polaromonas naphthalenivorans (strain CJ2).